A 296-amino-acid chain; its full sequence is Co-chaperone protein DjlA (296 aa).

At 1–15 the chain is on the periplasmic side; the sequence is MNLRDFFVITTWWGK. A helical transmembrane segment spans residues 16–39; that stretch reads ILGAFFGYLTAGPVGALFGILVGN. Residues 40-296 lie on the Cytoplasmic side of the membrane; sequence FFDRGLVSYY…YELICETKGW (257 aa). The interval 200 to 225 is disordered; that stretch reads QHYHNQQEYKHTSSSQGQQGYKPQSP. Residues 211 to 221 are compositionally biased toward polar residues; it reads TSSSQGQQGYK. Residues 231–296 enclose the J domain; it reads HAFALLEVSP…YELICETKGW (66 aa).

As to quaternary structure, homodimer.

The protein localises to the cell inner membrane. Regulatory DnaK co-chaperone. Direct interaction between DnaK and DjlA is needed for the induction of the wcaABCDE operon, involved in the synthesis of a colanic acid polysaccharide capsule, possibly through activation of the RcsB/RcsC phosphotransfer signaling pathway. The colanic acid capsule may help the bacterium survive conditions outside the host. The sequence is that of Co-chaperone protein DjlA from Legionella pneumophila subsp. pneumophila (strain Philadelphia 1 / ATCC 33152 / DSM 7513).